The chain runs to 271 residues: Formamidopyrimidine-DNA glycosylase (271 aa).

The active-site Schiff-base intermediate with DNA is Pro-2. The active-site Proton donor is the Glu-3. Catalysis depends on Lys-57, which acts as the Proton donor; for beta-elimination activity. Residues His-90, Arg-109, and Lys-151 each contribute to the DNA site. Residues 236-270 form an FPG-type zinc finger; that stretch reads HVYGRGGESCTQCGNLLSEIKLGQRATVFCGLCQT. The active-site Proton donor; for delta-elimination activity is the Arg-260.

This sequence belongs to the FPG family. Monomer. Zn(2+) is required as a cofactor.

It catalyses the reaction Hydrolysis of DNA containing ring-opened 7-methylguanine residues, releasing 2,6-diamino-4-hydroxy-5-(N-methyl)formamidopyrimidine.. The catalysed reaction is 2'-deoxyribonucleotide-(2'-deoxyribose 5'-phosphate)-2'-deoxyribonucleotide-DNA = a 3'-end 2'-deoxyribonucleotide-(2,3-dehydro-2,3-deoxyribose 5'-phosphate)-DNA + a 5'-end 5'-phospho-2'-deoxyribonucleoside-DNA + H(+). Involved in base excision repair of DNA damaged by oxidation or by mutagenic agents. Acts as a DNA glycosylase that recognizes and removes damaged bases. Has a preference for oxidized purines, such as 7,8-dihydro-8-oxoguanine (8-oxoG). Has AP (apurinic/apyrimidinic) lyase activity and introduces nicks in the DNA strand. Cleaves the DNA backbone by beta-delta elimination to generate a single-strand break at the site of the removed base with both 3'- and 5'-phosphates. The sequence is that of Formamidopyrimidine-DNA glycosylase from Shewanella woodyi (strain ATCC 51908 / MS32).